Here is a 156-residue protein sequence, read N- to C-terminus: Histone H2B.2 (156 aa).

Basic and acidic residues-rich tracts occupy residues 1-10 and 24-58; these read MAPKKDEKPA and AKAE…GEKK. Residues 1–63 are disordered; sequence MAPKKDEKPA…DGEKKDKKKK (63 aa). N6-acetyllysine occurs at positions 40 and 41. Lys152 is covalently cross-linked (Glycyl lysine isopeptide (Lys-Gly) (interchain with G-Cter in ubiquitin)).

The protein belongs to the histone H2B family. The nucleosome is a histone octamer containing two molecules each of H2A, H2B, H3 and H4 assembled in one H3-H4 heterotetramer and two H2A-H2B heterodimers. The octamer wraps approximately 147 bp of DNA. In terms of processing, the N-terminus is blocked. Can be acetylated to form H2BK33ac and H2BK34ac. Acetylated mainly on the ubiquitinated form. Post-translationally, monoubiquitinated to form H2BK143ub1; which is increased during the light period and may give a specific tag for epigenetic transcriptional activation.

It is found in the nucleus. The protein localises to the chromosome. Core component of nucleosome. Nucleosomes wrap and compact DNA into chromatin, limiting DNA accessibility to the cellular machineries which require DNA as a template. Histones thereby play a central role in transcription regulation, DNA repair, DNA replication and chromosomal stability. DNA accessibility is regulated via a complex set of post-translational modifications of histones, also called histone code, and nucleosome remodeling. In Chlamydomonas reinhardtii (Chlamydomonas smithii), this protein is Histone H2B.2.